The sequence spans 271 residues: Norsolorinic acid ketoreductase (271 aa).

A disordered region spans residues 1–22; that stretch reads MNGSLSQHDQERLSTPYRDGPP. The NADP(+) site is built by I36, N112, Y185, K189, V216, and T218. Y185 acts as the Proton donor in catalysis. The active-site Lowers pKa of active site Tyr is the K189.

Belongs to the short-chain dehydrogenases/reductases (SDR) family.

It is found in the cytoplasm. The protein localises to the cytosol. It localises to the vacuole. The enzyme catalyses (1'S)-averantin + NADP(+) = norsolorinic acid + NADPH + H(+). It participates in mycotoxin biosynthesis; aflatoxin biosynthesis. In terms of biological role, norsolorinic acid ketoreductase; part of the gene cluster that mediates the biosynthesis of aflatoxins, a group of polyketide-derived furanocoumarins, and part of the most toxic and carcinogenic compounds among the known mycotoxins. The four major aflatoxins produced by A.parasiticus are aflatoxin B1 (AFB1), aflatoxin B2 (AFB2), aflatoxin G1 (AFG1) and aflatoxin G2 (AFG2). Within the aflatoxin pathway, the norsolorinic acid ketoreductase aflD performs the second step by catalyzing the dehydration of norsolorinic acid (NOR) to form (1'S)-averantin (AVN). The biosynthesis of aflatoxins begins with the norsolorinic acid synthase aflC that combines a hexanoyl starter unit produced by the fatty acid synthase aflA/aflB and 7 malonyl-CoA extender units to synthesize the precursor NOR. The second step is the conversion of NOR to averantin and requires the norsolorinic acid ketoreductase aflD, which catalyzes the dehydration of norsolorinic acid to form (1'S)-averantin. The norsolorinic acid reductases aflE and aflF may also play a role in the conversion of NOR to AVN. The cytochrome P450 monooxygenase aflG then catalyzes the hydroxylation of AVN to 5'hydroxyaverantin (HAVN). The next step is performed by the 5'-hydroxyaverantin dehydrogenase aflH that transforms HAVN to 5'-oxoaverantin (OAVN) which is further converted to averufin (AVF) by aflK that plays a dual role in the pathway, as a 5'-oxoaverantin cyclase that mediates conversion of 5'-oxoaverantin, as well as a versicolorin B synthase in a later step in the pathway. The averufin oxidase aflI catalyzes the conversion of AVF to versiconal hemiacetal acetate (VHA). VHA is then the substrate for the versiconal hemiacetal acetate esterase aflJ to yield versiconal (VAL). Versicolorin B synthase aflK then converts VAL to versicolorin B (VERB) by closing the bisfuran ring of aflatoxin which is required for DNA-binding, thus giving to aflatoxin its activity as a mutagen. Then, the activity of the versicolorin B desaturase aflL leads to versicolorin A (VERA). A branch point starts from VERB since it can also be converted to dihydrodemethylsterigmatocystin (DMDHST), probably also by aflL, VERA being a precursor for aflatoxins B1 and G1, and DMDHST for aflatoxins B2 and G2. Next, the versicolorin reductase aflM and the cytochrome P450 monooxygenase aflN are involved in conversion of VERA to demethylsterigmatocystin (DMST). AflX and aflY seem also involved in this step, through probable aflX-mediated epoxide ring-opening step following versicolorin A oxidation and aflY-mediated Baeyer-Villiger oxidation required for the formation of the xanthone ring. The methyltransferase aflO then leads to the modification of DMST to sterigmatocystin (ST), and of DMDHST to dihydrosterigmatocystin (DHST). Both ST and DHST are then substrates of the O-methyltransferase aflP to yield O-methylsterigmatocystin (OMST) and dihydro-O-methylsterigmatocystin (DHOMST), respectively. Finally OMST is converted to aflatoxins B1 and G1, and DHOMST to aflatoxins B2 and G2, via the action of several enzymes including O-methylsterigmatocystin oxidoreductase aflQ, the cytochrome P450 monooxygenase aflU, but also the NADH-dependent flavin oxidoreductase nadA which is specifically required for the synthesis of AFG1. In Aspergillus parasiticus (strain ATCC 56775 / NRRL 5862 / SRRC 143 / SU-1), this protein is Norsolorinic acid ketoreductase.